The primary structure comprises 301 residues: Large ribosomal subunit protein uL18 (301 aa).

Belongs to the universal ribosomal protein uL18 family. As to quaternary structure, component of the large ribosomal subunit (LSU). Mature N.crassa ribosomes consist of a small (40S) and a large (60S) subunit. The 40S small subunit contains 1 molecule of ribosomal RNA (18S rRNA) and at least 32 different proteins. The large 60S subunit contains 3 rRNA molecules (26S, 5.8S and 5S rRNA) and at least 42 different proteins.

It is found in the cytoplasm. Its function is as follows. Component of the ribosome, a large ribonucleoprotein complex responsible for the synthesis of proteins in the cell. The small ribosomal subunit (SSU) binds messenger RNAs (mRNAs) and translates the encoded message by selecting cognate aminoacyl-transfer RNA (tRNA) molecules. The large subunit (LSU) contains the ribosomal catalytic site termed the peptidyl transferase center (PTC), which catalyzes the formation of peptide bonds, thereby polymerizing the amino acids delivered by tRNAs into a polypeptide chain. The nascent polypeptides leave the ribosome through a tunnel in the LSU and interact with protein factors that function in enzymatic processing, targeting, and the membrane insertion of nascent chains at the exit of the ribosomal tunnel. This is Large ribosomal subunit protein uL18 (rpl-5) from Neurospora crassa (strain ATCC 24698 / 74-OR23-1A / CBS 708.71 / DSM 1257 / FGSC 987).